A 63-amino-acid chain; its full sequence is Large ribosomal subunit protein bL28 (63 aa).

The protein belongs to the bacterial ribosomal protein bL28 family.

This is Large ribosomal subunit protein bL28 from Desulfatibacillum aliphaticivorans.